A 156-amino-acid polypeptide reads, in one-letter code: Small ribosomal subunit protein uS7 (156 aa).

This sequence belongs to the universal ribosomal protein uS7 family. As to quaternary structure, part of the 30S ribosomal subunit. Contacts proteins S9 and S11.

In terms of biological role, one of the primary rRNA binding proteins, it binds directly to 16S rRNA where it nucleates assembly of the head domain of the 30S subunit. Is located at the subunit interface close to the decoding center, probably blocks exit of the E-site tRNA. The polypeptide is Small ribosomal subunit protein uS7 (Mycobacterium bovis (strain ATCC BAA-935 / AF2122/97)).